A 25-amino-acid polypeptide reads, in one-letter code: Bifunctional chitinase/lysozyme (25 aa).

Belongs to the glycosyl hydrolase 19 family. Chitinase class I subfamily. Monomer.

Its subcellular location is the secreted. It localises to the extracellular space. It carries out the reaction Random endo-hydrolysis of N-acetyl-beta-D-glucosaminide (1-&gt;4)-beta-linkages in chitin and chitodextrins.. It catalyses the reaction Hydrolysis of (1-&gt;4)-beta-linkages between N-acetylmuramic acid and N-acetyl-D-glucosamine residues in a peptidoglycan and between N-acetyl-D-glucosamine residues in chitodextrins.. Bifunctional enzyme with lysozyme/chitinase activity. This chain is Bifunctional chitinase/lysozyme, found in Carica papaya (Papaya).